The following is a 381-amino-acid chain: NF-kappa-B inhibitor-like protein 1 (381 aa).

The interval 1–34 is disordered; the sequence is MSNPSPQVPEEEASTSVCRPKSSMASTSRRQRRE. ANK repeat units follow at residues 64-93 and 97-130; these read GQPP…DPAH and HGDT…AMGI. Disordered stretches follow at residues 129-167 and 186-294; these read GIKN…EWRQ and GDAS…RGSL. Ser150 is modified (phosphoserine). A compositionally biased stretch (acidic residues) spans 150 to 159; that stretch reads SAEEEEEDDA. 2 stretches are compositionally biased toward basic and acidic residues: residues 218–228 and 238–287; these read REAEGSRRPPR and QQEE…EHPR.

In terms of assembly, interacts with CACTIN (via N-terminal domain); the interaction occurs in a proinflammatory-independent manner. In terms of tissue distribution, detected in different cell types including monocytes, T-cells, B-cells and hepatocytes.

Its subcellular location is the nucleus. Functionally, involved in the regulation of innate immune response. Acts as negative regulator of Toll-like receptor and interferon-regulatory factor (IRF) signaling pathways. Contributes to the negative regulation of transcriptional activation of NF-kappa-B target genes in response to endogenous proinflammatory stimuli. This Homo sapiens (Human) protein is NF-kappa-B inhibitor-like protein 1 (NFKBIL1).